Consider the following 851-residue polypeptide: Venom phosphodiesterase 1 (851 aa).

A signal peptide spans 1 to 23 (MIQQKVLFISLVAVTLGLGLGLG). SMB domains follow at residues 30–73 (PQVS…VLPT) and 74–118 (QSWS…GETS). 16 disulfides stabilise this stretch: Cys-34-Cys-38, Cys-34-Cys-51, Cys-38-Cys-69, Cys-49-Cys-51, Cys-49-Cys-62, Cys-55-Cys-61, Cys-62-Cys-69, Cys-78-Cys-83, Cys-78-Cys-95, Cys-83-Cys-113, Cys-93-Cys-95, Cys-93-Cys-106, Cys-99-Cys-105, Cys-106-Cys-113, Cys-124-Cys-170, and Cys-132-Cys-344. The N-linked (GlcNAc...) asparagine glycan is linked to Asn-39. A Cell attachment site motif is present at residues 58-60 (RQA). The a divalent metal cation site is built by Asp-147 and Thr-185. Catalysis depends on Thr-185, which acts as the AMP-threonine intermediate. 3 N-linked (GlcNAc...) asparagine glycosylation sites follow: Asn-216, Asn-259, and Asn-270. Lys-271 contacts AMP. Residues Asp-305, His-309, Asp-352, and His-353 each coordinate a divalent metal cation. An AMP-binding site is contributed by His-309. Intrachain disulfides connect Cys-360–Cys-457, Cys-408–Cys-793, Cys-541–Cys-599, Cys-554–Cys-654, Cys-556–Cys-639, and Cys-762–Cys-772. N-linked (GlcNAc...) asparagine glycosylation occurs at Asn-405. His-462 lines the a divalent metal cation pocket. N-linked (GlcNAc...) asparagine glycans are attached at residues Asn-512, Asn-594, Asn-674, and Asn-745.

This sequence belongs to the nucleotide pyrophosphatase/phosphodiesterase family. As to quaternary structure, monomer cleaved in two subunits; disulfide-linked. Is synthesized as a single-chain protein and is subsequently cleaved to form a two-subunit protein held together with disulfide bonds. Requires a divalent metal cation as cofactor. In terms of tissue distribution, expressed by venom gland.

It localises to the secreted. It catalyses the reaction ADP + H2O = AMP + phosphate + H(+). In terms of biological role, hydrolyzes ADP with high activity. Shows weak or no activity on 5'-AMP, 5'-GMP, 3'-AMP, ATP, cAMP, and cGMP. Is devoid of monophosphatase and proteinase activities. Dose-dependently inhibits platelet aggregation induced by ADP and collagen. The sequence is that of Venom phosphodiesterase 1 from Crotalus adamanteus (Eastern diamondback rattlesnake).